A 144-amino-acid polypeptide reads, in one-letter code: MNFKYIVAVSFLIASAYARSVQNDEQSLSQRDVLEEESLREIRGIGGKILSGLKTALKGAAKELASTYLHRKRTAEEHEVMKRLEAVMRDLDSLDYPEEASERETRGFNQDEIANLFTKKEKRILGPVLGLVGEPLGGLIKKIG.

The first 18 residues, 1–18 (MNFKYIVAVSFLIASAYA), serve as a signal peptide directing secretion. 2 propeptides span residues 19–43 (RSVQ…REIR) and 73–122 (RTAE…KKEK). The residue at position 143 (isoleucine 143) is an Isoleucine amide.

The protein belongs to the bombinin family. As to expression, expressed by the skin glands.

The protein resides in the secreted. Functionally, maximin-3 shows antibacterial activity against both Gram-positive and Gram-negative bacteria. It also shows antimicrobial activity against the fungus C.albicans, but not against A.flavus nor P.uticale. It has little hemolytic activity. It possess a significant cytotoxicity against tumor cell lines. It possess a significant anti-HIV activity. It shows high spermicidal activity. Maximin-H14 shows antimicrobial activity against bacteria and against the fungus C.albicans. Shows strong hemolytic activity. The protein is Maximins 3/H14 of Bombina maxima (Giant fire-bellied toad).